The sequence spans 137 residues: Phosphomevalonate dehydratase small subunit (137 aa).

Residue S62 is the Proton acceptor of the active site.

It belongs to the AcnX type II small subunit family. Heterodimer composed of a large subunit (PMDh-L) and a small subunit (PMDh-S).

The enzyme catalyses (R)-5-phosphomevalonate = (2E)-3-methyl-5-phosphooxypent-2-enoate + H2O. It functions in the pathway isoprenoid biosynthesis; isopentenyl diphosphate biosynthesis via mevalonate pathway. Its function is as follows. Component of a hydro-lyase that catalyzes the dehydration of mevalonate 5-phosphate (MVA5P) to form trans-anhydromevalonate 5-phosphate (tAHMP). Involved in the archaeal mevalonate (MVA) pathway, which provides fundamental precursors for isoprenoid biosynthesis, such as isopentenyl diphosphate (IPP) and dimethylallyl diphosphate (DMAPP). This chain is Phosphomevalonate dehydratase small subunit, found in Methanothrix thermoacetophila (strain DSM 6194 / JCM 14653 / NBRC 101360 / PT) (Methanosaeta thermophila).